The chain runs to 352 residues: Membrane progestin receptor alpha (352 aa).

Topologically, residues 1-75 (MATVVMEQIG…FLTLFQRHNE (75 aa)) are cytoplasmic. The chain crosses the membrane as a helical span at residues 76–96 (TLNVWTHLLAAFIILVKWQEI). Residues 97-110 (SETVDFLRDPHAQP) are Extracellular-facing. Residues 111–131 (LFIVLLAAFTYLSFSALAHLL) form a helical membrane-spanning segment. Topologically, residues 132-139 (SAKSELSY) are cytoplasmic. The helical transmembrane segment at 140-160 (YTFYFLDYVGVAVYQYGSALA) threads the bilayer. Over 161 to 175 (HYYYAIEKEWHTKVQ) the chain is Extracellular. The chain crosses the membrane as a helical span at residues 176-196 (GLFLPAAAFLAWLTCFGCCYG). The Cytoplasmic segment spans residues 197–242 (KYASPELPKVANKLFQVVPSALAYCLDISPVVHRIYSCYQEGCSDP). A helical transmembrane segment spans residues 243–263 (VVAYHFYHVVFFLIGAYFFCC). At 264-275 (PHPESLFPGKCD) the chain is on the extracellular side. The chain crosses the membrane as a helical span at residues 276 to 296 (FIGQGHQLFHVFVVVCTLTQV). Topologically, residues 297-316 (EALRTDFTERRPFYERLHGD) are cytoplasmic. A helical membrane pass occupies residues 317 to 337 (LAHDAVALFIFTACCSALTAF). The Extracellular segment spans residues 338–352 (YVRQRVRASLHEKGE).

It belongs to the ADIPOR family. In terms of tissue distribution, strongly expressed in ovary and brain; lower expression in testis and pituitary. Not detected in heart, kidney, spleen, intestine, gill and muscle.

It is found in the cell membrane. Steroid membrane receptor. Binds progesterone, progestin and 17-hydroxyprogesterone in vitro. Capable of mediating progestin-induced oocyte maturation. This chain is Membrane progestin receptor alpha (mpra), found in Cynoscion nebulosus (Spotted seatrout).